The following is a 156-amino-acid chain: Large ribosomal subunit protein eL24 (156 aa).

A compositionally biased stretch (basic and acidic residues) spans 110-123 (RAAKEKQKQKELEK). The tract at residues 110-156 (RAAKEKQKQKELEKKAKKVEKKKPTLAPKQKAAKITQKPAPRVGGKR) is disordered.

It belongs to the eukaryotic ribosomal protein eL24 family.

This chain is Large ribosomal subunit protein eL24 (RPL24), found in Schistosoma japonicum (Blood fluke).